A 438-amino-acid polypeptide reads, in one-letter code: Aflatoxin cluster transcriptional coactivator aflS (438 aa).

The HTH iclR-type domain maps to 65 to 134; the sequence is LALYNQLLAC…PSPGHVAHSV (70 aa). The H-T-H motif DNA-binding region spans 95-114; the sequence is FEDVADIAGVPECRLRRLVR.

In terms of assembly, interacts with aflR.

It is found in the nucleus. The protein localises to the endosome. Its function is as follows. Transcription coactivator involved in regulation of the aflatoxin biosynthesis gene cluster with aflR. The ratio of the expression data between aflS:aflR plays a crucial role in the regulation of aflatoxins production. A high ratio, produced at a range between 17 and 30 degrees Celsius, corresponds with the production profile of aflatoxin G1 biosynthesis. A low ratio, produced over 30 degrees Celsius, is related to aflatoxin B1 biosynthesis. AflJ may act in aflR transport to or from the nucleus, thus controlling the availability of aflR for transcriptional activation of aflatoxin biosynthesis cluster genes. AflJ may also assist in directing endosomes to the cytoplasmic membrane for aflatoxin export. In Aspergillus parasiticus (strain ATCC 56775 / NRRL 5862 / SRRC 143 / SU-1), this protein is Aflatoxin cluster transcriptional coactivator aflS.